Here is a 209-residue protein sequence, read N- to C-terminus: Imidazole glycerol phosphate synthase subunit HisH (209 aa).

The Glutamine amidotransferase type-1 domain maps to 3 to 209; the sequence is SVAVIDYGMG…ANFLTWNGVS (207 aa). Catalysis depends on cysteine 82, which acts as the Nucleophile. Active-site residues include histidine 187 and glutamate 189.

In terms of assembly, heterodimer of HisH and HisF.

It is found in the cytoplasm. It catalyses the reaction 5-[(5-phospho-1-deoxy-D-ribulos-1-ylimino)methylamino]-1-(5-phospho-beta-D-ribosyl)imidazole-4-carboxamide + L-glutamine = D-erythro-1-(imidazol-4-yl)glycerol 3-phosphate + 5-amino-1-(5-phospho-beta-D-ribosyl)imidazole-4-carboxamide + L-glutamate + H(+). The enzyme catalyses L-glutamine + H2O = L-glutamate + NH4(+). The protein operates within amino-acid biosynthesis; L-histidine biosynthesis; L-histidine from 5-phospho-alpha-D-ribose 1-diphosphate: step 5/9. In terms of biological role, IGPS catalyzes the conversion of PRFAR and glutamine to IGP, AICAR and glutamate. The HisH subunit catalyzes the hydrolysis of glutamine to glutamate and ammonia as part of the synthesis of IGP and AICAR. The resulting ammonia molecule is channeled to the active site of HisF. The protein is Imidazole glycerol phosphate synthase subunit HisH of Nitrosococcus oceani (strain ATCC 19707 / BCRC 17464 / JCM 30415 / NCIMB 11848 / C-107).